Reading from the N-terminus, the 237-residue chain is Probable glutathione-independent glyoxalase SNO4 (237 aa).

Active-site residues include Cys138, His139, and Glu170.

Belongs to the peptidase C56 family. HSP31-like subfamily. In terms of assembly, homodimer.

The protein localises to the cytoplasm. It localises to the P-body. It carries out the reaction methylglyoxal + H2O = (R)-lactate + H(+). In terms of biological role, catalyzes the conversion of methylglyoxal (MG) to D-lactate in a single glutathione (GSH)-independent step. May play a role in detoxifying endogenously produced glyoxals. Involved in protection against reactive oxygen species (ROS). Important for viability in stationary phase. May negatively regulate TORC1 in response to nutrient limitation. The chain is Probable glutathione-independent glyoxalase SNO4 from Saccharomyces cerevisiae (strain ATCC 204508 / S288c) (Baker's yeast).